The sequence spans 652 residues: Acetyl-coenzyme A synthetase (652 aa).

CoA-binding positions include 189-192 (RGGK) and Thr311. Residues 387–389 (GEP), 411–416 (DTWWQT), Asp500, and Arg515 contribute to the ATP site. Residue Ser523 participates in CoA binding. Arg526 serves as a coordination point for ATP. Positions 537, 539, and 542 each coordinate Mg(2+). Residue Arg584 participates in CoA binding. N6-acetyllysine is present on Lys609.

It belongs to the ATP-dependent AMP-binding enzyme family. It depends on Mg(2+) as a cofactor. Acetylated. Deacetylation by the SIR2-homolog deacetylase activates the enzyme.

It carries out the reaction acetate + ATP + CoA = acetyl-CoA + AMP + diphosphate. Catalyzes the conversion of acetate into acetyl-CoA (AcCoA), an essential intermediate at the junction of anabolic and catabolic pathways. AcsA undergoes a two-step reaction. In the first half reaction, AcsA combines acetate with ATP to form acetyl-adenylate (AcAMP) intermediate. In the second half reaction, it can then transfer the acetyl group from AcAMP to the sulfhydryl group of CoA, forming the product AcCoA. This Rhizobium rhizogenes (Agrobacterium rhizogenes) protein is Acetyl-coenzyme A synthetase.